The sequence spans 766 residues: Dipeptidyl peptidase 4 (766 aa).

The Cytoplasmic portion of the chain corresponds to 1 to 6; sequence MKTPWK. The chain crosses the membrane as a helical; Signal-anchor for type II membrane protein span at residues 7–27; that stretch reads VLLGLLGIAALVTVITVPVVL. Over 28–766 the chain is Extracellular; that stretch reads LNKGTDDAAA…HFLKQCFSLP (739 aa). Asn-85, Asn-92, Asn-150, Asn-179, Asn-219, Asn-229, Asn-279, and Asn-321 each carry an N-linked (GlcNAc...) asparagine glycan. Cystine bridges form between Cys-385–Cys-394, Cys-444–Cys-447, and Cys-454–Cys-472. The active-site Charge relay system is the Ser-630. Cys-649 and Cys-762 are oxidised to a cystine. Asn-685 carries N-linked (GlcNAc...) asparagine glycosylation. Catalysis depends on charge relay system residues Asp-708 and His-740.

It belongs to the peptidase S9B family. DPPIV subfamily. As to quaternary structure, monomer. Homodimer. Heterodimer with Seprase (FAP). Requires homodimerization for optimal dipeptidyl peptidase activity and T-cell costimulation. Found in a membrane raft complex, at least composed of BCL10, CARD11, DPP4 and IKBKB. Associates with collagen. Interacts with PTPRC; the interaction is enhanced in an interleukin-12-dependent manner in activated lymphocytes. Interacts (via extracellular domain) with ADA; does not inhibit its dipeptidyl peptidase activity. Interacts with CAV1 (via the N-terminus); the interaction is direct. Interacts (via cytoplasmic tail) with CARD11 (via PDZ domain); its homodimerization is necessary for interaction with CARD11. Interacts with IGF2R; the interaction is direct. Interacts with GPC3. The soluble form (Dipeptidyl peptidase 4 soluble form also named SDPP) derives from the membrane form (Dipeptidyl peptidase 4 membrane form also named MDPP) by proteolytic processing. Post-translationally, N- and O-Glycosylated. In terms of processing, phosphorylated. Mannose 6-phosphate residues in the carbohydrate moiety are necessary for interaction with IGF2R in activated T-cells. Mannose 6-phosphorylation is induced during T-cell activation.

The protein localises to the secreted. The protein resides in the cell membrane. It is found in the apical cell membrane. It localises to the cell projection. Its subcellular location is the invadopodium membrane. The protein localises to the lamellipodium membrane. The protein resides in the cell junction. It is found in the membrane raft. The enzyme catalyses Release of an N-terminal dipeptide, Xaa-Yaa-|-Zaa-, from a polypeptide, preferentially when Yaa is Pro, provided Zaa is neither Pro nor hydroxyproline.. Inhibited by GPC3 and diprotin A. Functionally, cell surface glycoprotein receptor involved in the costimulatory signal essential for T-cell receptor (TCR)-mediated T-cell activation. Acts as a positive regulator of T-cell coactivation, by binding at least ADA, CAV1, IGF2R, and PTPRC. Its binding to CAV1 and CARD11 induces T-cell proliferation and NF-kappa-B activation in a T-cell receptor/CD3-dependent manner. Its interaction with ADA also regulates lymphocyte-epithelial cell adhesion. In association with FAP is involved in the pericellular proteolysis of the extracellular matrix (ECM), the migration and invasion of endothelial cells into the ECM. May be involved in the promotion of lymphatic endothelial cells adhesion, migration and tube formation. When overexpressed, enhanced cell proliferation, a process inhibited by GPC3. Also acts as a serine exopeptidase with a dipeptidyl peptidase activity that regulates various physiological processes by cleaving peptides in the circulation, including many chemokines, mitogenic growth factors, neuropeptides and peptide hormones such as brain natriuretic peptide 32. Removes N-terminal dipeptides sequentially from polypeptides having unsubstituted N-termini provided that the penultimate residue is proline. This Sus scrofa (Pig) protein is Dipeptidyl peptidase 4 (DPP4).